Consider the following 105-residue polypeptide: U-scoloptoxin(10)-Sm3a (105 aa).

The signal sequence occupies residues methionine 1–threonine 23.

The protein belongs to the scoloptoxin-10 family. Post-translationally, contains 3 disulfide bonds. As to expression, expressed by the venom gland.

Its subcellular location is the secreted. This chain is U-scoloptoxin(10)-Sm3a, found in Scolopendra morsitans (Tanzanian blue ringleg centipede).